Consider the following 684-residue polypeptide: DNA helicase IV (684 aa).

In terms of domain architecture, UvrD-like helicase ATP-binding spans 195–505 (SPLNPAQARA…CDLDTTYRFN (311 aa)). ATP contacts are provided by residues 216–223 (AGAGSGKT) and arginine 503.

It belongs to the helicase family. UvrD subfamily.

The enzyme catalyses Couples ATP hydrolysis with the unwinding of duplex DNA by translocating in the 3'-5' direction.. It carries out the reaction ATP + H2O = ADP + phosphate + H(+). Functionally, helicase IV catalyzes the unwinding of duplex DNA in the 3' to 5' direction with respect to the bound single strand in a reaction that is dependent upon the hydrolysis of ATP. This Escherichia coli (strain K12) protein is DNA helicase IV (helD).